Here is a 120-residue protein sequence, read N- to C-terminus: Ig heavy chain V region AC38 15.3 (120 aa).

Residues 1–98 form a v segment region; the sequence is QVQLLQPGTE…EDSAVYYCAR (98 aa). Cys22 and Cys96 form a disulfide bridge. A d segment region spans residues 99 to 105; that stretch reads WDYEGDR. The segment at 106–120 is j segment; that stretch reads YFDVWGTGTTVTVSS.

In Mus musculus (Mouse), this protein is Ig heavy chain V region AC38 15.3.